A 344-amino-acid polypeptide reads, in one-letter code: Dihydroorotase (344 aa).

Zn(2+)-binding residues include histidine 13 and histidine 15. Residues 15–17 (HVR) and asparagine 41 contribute to the substrate site. The Zn(2+) site is built by lysine 99, histidine 136, and histidine 174. Lysine 99 carries the N6-carboxylysine modification. Histidine 136 contributes to the substrate binding site. Leucine 219 lines the substrate pocket. Residue aspartate 247 coordinates Zn(2+). Residue aspartate 247 is part of the active site. Substrate-binding residues include histidine 251 and alanine 263.

It belongs to the metallo-dependent hydrolases superfamily. DHOase family. Class II DHOase subfamily. In terms of assembly, homodimer. It depends on Zn(2+) as a cofactor.

The catalysed reaction is (S)-dihydroorotate + H2O = N-carbamoyl-L-aspartate + H(+). Its pathway is pyrimidine metabolism; UMP biosynthesis via de novo pathway; (S)-dihydroorotate from bicarbonate: step 3/3. In terms of biological role, catalyzes the reversible cyclization of carbamoyl aspartate to dihydroorotate. The chain is Dihydroorotase from Azoarcus sp. (strain BH72).